A 252-amino-acid chain; its full sequence is Cell division protein ZapD (252 aa).

This sequence belongs to the ZapD family. In terms of assembly, interacts with FtsZ.

It localises to the cytoplasm. Functionally, cell division factor that enhances FtsZ-ring assembly. Directly interacts with FtsZ and promotes bundling of FtsZ protofilaments, with a reduction in FtsZ GTPase activity. The polypeptide is Cell division protein ZapD (Chromobacterium violaceum (strain ATCC 12472 / DSM 30191 / JCM 1249 / CCUG 213 / NBRC 12614 / NCIMB 9131 / NCTC 9757 / MK)).